The following is a 450-amino-acid chain: Probable galactarate/D-glucarate transporter GudP (450 aa).

Over Met-1–Trp-20 the chain is Cytoplasmic. The chain crosses the membrane as a helical span at residues Ile-21–Ile-41. Topologically, residues Ala-42–Gly-58 are periplasmic. The chain crosses the membrane as a helical span at residues Tyr-59–Leu-79. At Asp-80–Lys-85 the chain is on the cytoplasmic side. Residues Arg-86–Val-105 form a helical membrane-spanning segment. Topologically, residues Asp-106 to Ser-109 are periplasmic. Residues Gly-110–Phe-132 form a helical membrane-spanning segment. Residues Pro-133–Ser-153 are Cytoplasmic-facing. A helical transmembrane segment spans residues Ile-154 to Thr-174. Topologically, residues His-175 to Glu-176 are periplasmic. The chain crosses the membrane as a helical span at residues Val-177–Trp-197. Residues Leu-198–Met-254 are Cytoplasmic-facing. Residues Ile-255 to Phe-275 traverse the membrane as a helical segment. Residues Pro-276–Ala-290 are Periplasmic-facing. The chain crosses the membrane as a helical span at residues Gly-291 to Ile-311. Topologically, residues Ser-312–Pro-329 are cytoplasmic. The chain crosses the membrane as a helical span at residues Ile-330–Trp-350. Residue Met-351 is a topological domain, periplasmic. Residues Ile-352–Val-372 traverse the membrane as a helical segment. Residues Met-373–Gly-387 lie on the Cytoplasmic side of the membrane. The chain crosses the membrane as a helical span at residues Leu-388–Val-408. The Periplasmic portion of the chain corresponds to Gly-409 to Asn-415. A helical membrane pass occupies residues Gly-416–Val-436. The Cytoplasmic segment spans residues Gly-437–Gln-450.

Belongs to the major facilitator superfamily. Phthalate permease family.

The protein localises to the cell inner membrane. The catalysed reaction is galactarate(in) + H(+)(in) = galactarate(out) + H(+)(out). It carries out the reaction D-glucarate(in) + H(+)(in) = D-glucarate(out) + H(+)(out). It catalyses the reaction (R)-glycerate(in) + H(+)(in) = (R)-glycerate(out) + H(+)(out). In terms of biological role, probably involved in the uptake of galactarate and/or D-glucarate. May also transport D-glycerate. The chain is Probable galactarate/D-glucarate transporter GudP from Escherichia coli (strain K12).